The sequence spans 830 residues: DNA replication licensing factor MCM6 (830 aa).

Residues 159-186 (CLDCGNVVKNVEQQFKYTEPIICVNATC) form a C4-type zinc finger. The MCM domain maps to 349-555 (FFNKIVDSIC…NTDYHIAHHI (207 aa)). 399-406 (GDPSCAKS) contacts ATP. Positions 531 to 534 (SRFD) match the Arginine finger motif. The interval 671-710 (DFQDADDGTNVPADNDAGQPTEMDAAPQQDGPENEQAADT) is disordered.

Belongs to the MCM family. Component of the minichromosome maintenance (MCM) complex, a heterotetramer composed of MCM2, MCM3, MCM4, MCM5, MCM6 and MCM7.

The protein resides in the nucleus. It catalyses the reaction ATP + H2O = ADP + phosphate + H(+). Functionally, probable component of the MCM2-7 complex (MCM complex) that may function as a DNA helicase and which is essential to undergo a single round of replication initiation and elongation per cell cycle in eukaryotic cells. In Oryza sativa subsp. indica (Rice), this protein is DNA replication licensing factor MCM6 (MCM6).